Reading from the N-terminus, the 82-residue chain is uncharacterized protein (82 aa).

A disordered region spans residues 22–82; that stretch reads LRRSRSSRNG…WPPPCAFTPG (61 aa). Positions 47-58 are enriched in basic and acidic residues; that stretch reads HRGEPGHPRMEE. Over residues 73 to 82 the composition is skewed to pro residues; it reads WPPPCAFTPG.

This is an uncharacterized protein from Homo sapiens (Human).